Consider the following 1106-residue polypeptide: MSSNNESIKNWVSDKIFDILGYRESTMVDYIIALSKKAKDVNSFISTLTEQDFPINSNTKSFAQELLNKSQQKIQNITSSSSSSSSTSLSSSSSSKDKEKEKIEFLKKNKSYKLVIDHDDDIVNSSGSSDSDSDSERKRKKKEKKKEKKDKKDKKDKKSSTRKKSDNNWDDEIEPEPIKPNEKEDENNNNENNDNNNDNNNLQKRQPYKSIIEEENNNDNNNNNGEEDEYEREQREVKELSDRIKKRDEKSTKKKIVDDSETKESIERKNRLEQNEQLETERTKSRRKYLVGEEQKRLILLKREIEEEYELFKDQKLTEQEIKDFEKKKKLYELASQRINESQQSDDYYQLPSEIKDKDSLLKSSYINDNKNKKGNDSSSSSSYNPEQKEWEQNRMKSAISENRGLSTANIGGGNEEYEYVFEDQIEFIKEEVLKQGQKGDGVMILKPGDDGSAQAKMTIQEVRKSLPVYPYREQLIDAVREYQVLIIVGETGSGKTTQIPQYLHEAGFSKTGKIGCTQPRRVAAMSVAARVAEEVGCKLGNEVGYSIRFEDCTSQKTVLQYMTDGMLVREFLTAPDLASYSVLIIDEAHERTLHTDILFGLLKDITRFRPDLKLLISSATMDAERFSDYFDGAPTFNIPGRKYEVTTHYTQAPEADYLDAAVVTVLQIHITEPLGDILVFLTGQEEVDQAAEMLQTRTRGLGTKIKELIITRIYSTLPTDLQAKIFEPTPPNARKVVLATNIAETSLTIDGIIYVIDPGFCKQKMFNPRTGMESLVITPVSRASANQRKGRAGRVAPGKCFRLFTAWAFDNELEENTIPEIQRTNLGNVVLLLKSMGINDLMNFDFMDPPPAQTLIAALEQLYALGALNDRGQLTKLGRKMAEFPVDPQLSKMIIASEKYKCSEEILTICAMLSVGNTIFYRPKDKAFAADAARKLFFHPQGDHLTLMNVFNQWRESGYAVQWCFENFIQHRSMKRAQDVRDQLELLLERVEIPLVSNVDDTDSIRKCIASGFFYNSAKLEKSGLFRTTKHNQSVQIHPSSCLFQSPPKWVVYHELVLTTKEFMRQIVEIQSSWLHEIAPHIYKEKDVNDNQKLPKNIGKKQINK.

Disordered regions lie at residues 73-100 (KIQN…DKEK), 120-286 (DDIV…TKSR), and 366-394 (YIND…WEQN). Over residues 78 to 94 (TSSSSSSSSTSLSSSSS) the composition is skewed to low complexity. Basic residues predominate over residues 138 to 155 (KRKKKEKKKEKKDKKDKK). The span at 156–167 (DKKSSTRKKSDN) shows a compositional bias: basic and acidic residues. The span at 189–201 (NNENNDNNNDNNN) shows a compositional bias: low complexity. Over residues 232–283 (REQREVKELSDRIKKRDEKSTKKKIVDDSETKESIERKNRLEQNEQLETERT) the composition is skewed to basic and acidic residues. The Helicase ATP-binding domain occupies 477–640 (IDAVREYQVL…FDGAPTFNIP (164 aa)). 490 to 497 (GETGSGKT) is an ATP binding site. Positions 587–590 (DEAH) match the DEAH box motif. The Helicase C-terminal domain maps to 665–838 (TVLQIHITEP…NVVLLLKSMG (174 aa)).

This sequence belongs to the DEAD box helicase family. DEAH subfamily. DDX16/PRP8 sub-subfamily. In terms of assembly, component of pre-catalytic spliceosome complexes.

The protein localises to the nucleus. It localises to the nucleoplasm. The catalysed reaction is ATP + H2O = ADP + phosphate + H(+). Functionally, required for pre-mRNA splicing as component of the spliceosome. Contributes to pre-mRNA splicing after spliceosome formation and prior to the first transesterification reaction. The polypeptide is Putative pre-mRNA-splicing factor ATP-dependent RNA helicase DHX16 (dhx16) (Dictyostelium discoideum (Social amoeba)).